Reading from the N-terminus, the 298-residue chain is Lysozyme-like protein 1 (298 aa).

The first 16 residues, 1 to 16 (MLKLAFVTFLFALASA), serve as a signal peptide directing secretion. The region spanning 59-277 (YAYAVDISVP…AAASSKNTDF (219 aa)) is the Ch-type lysozyme domain.

The protein belongs to the glycosyl hydrolase 25 family. As to expression, expressed in intestine, IL2 and IL6 neurons and some neurons in the head ganglia.

The protein localises to the cytoplasmic vesicle lumen. Its function is as follows. Involved in resistance to Gram-negative bacterium S.marcescens and to bacterium Gram-positive S.aureus infection. In Caenorhabditis elegans, this protein is Lysozyme-like protein 1.